A 240-amino-acid chain; its full sequence is 7-cyano-7-deazaguanine synthase (240 aa).

18-28 lines the ATP pocket; the sequence is FSGGQDSTTCL. The Zn(2+) site is built by C197, C206, C209, and C212.

The protein belongs to the QueC family. The cofactor is Zn(2+).

The enzyme catalyses 7-carboxy-7-deazaguanine + NH4(+) + ATP = 7-cyano-7-deazaguanine + ADP + phosphate + H2O + H(+). The protein operates within purine metabolism; 7-cyano-7-deazaguanine biosynthesis. Catalyzes the ATP-dependent conversion of 7-carboxy-7-deazaguanine (CDG) to 7-cyano-7-deazaguanine (preQ(0)). The chain is 7-cyano-7-deazaguanine synthase from Shewanella baltica (strain OS223).